The sequence spans 514 residues: Cytidine and dCMP deaminase domain-containing protein 1 (514 aa).

2 stretches are compositionally biased toward polar residues: residues 1–11 and 18–27; these read MKEAGQMQNLE and SVSTQTGSMT. Disordered regions lie at residues 1–27 and 55–83; these read MKEA…GSMT and RQKS…TDKR. Positions 59 to 83 are enriched in basic and acidic residues; that stretch reads QKNEEGKHGPLGDNEERTRVSTDKR. A CMP/dCMP-type deaminase 1 domain is found at 70 to 168; the sequence is GDNEERTRVS…SLLTEASSSE (99 aa). Zn(2+)-binding residues include H109, C134, and C137. Positions 271-283 match the Nuclear export signal motif; that stretch reads NLRQNMKDLILLL. Residues 317–482 form the CMP/dCMP-type deaminase 2 domain; that stretch reads EIARHCMVQA…LNPSGAYGLE (166 aa). H398 is a Zn(2+) binding site. E400 (proton donor) is an active-site residue. Zn(2+)-binding residues include C426 and C429. Positions 480 to 514 are disordered; that stretch reads GLEQNEPERRENGVLRPVPQKEEQHQDKKLRLGIH. The span at 485–514 shows a compositional bias: basic and acidic residues; that stretch reads EPERRENGVLRPVPQKEEQHQDKKLRLGIH. Positions 488-510 match the Bipartite nuclear localization signal motif; that stretch reads RRENGVLRPVPQKEEQHQDKKLR.

This sequence belongs to the cytidine and deoxycytidylate deaminase family. Requires Zn(2+) as cofactor. As to expression, widely expressed. Expressed at high levels in the testis.

Its subcellular location is the cytoplasm. The protein localises to the nucleus. It catalyses the reaction 2'-deoxycytidine + H2O + H(+) = 2'-deoxyuridine + NH4(+). The catalysed reaction is cytidine + H2O + H(+) = uridine + NH4(+). Functionally, catalyzes the deamination of cytidine and deoxycytidine into uridine and deoxyuridine, respectively. May play an important role in testicular development and spermatogenesis. This chain is Cytidine and dCMP deaminase domain-containing protein 1 (CDADC1), found in Homo sapiens (Human).